A 426-amino-acid polypeptide reads, in one-letter code: Spermatogenesis-associated protein 2-like protein (426 aa).

Disordered stretches follow at residues 204–223, 234–256, 269–300, and 316–347; these read AQDE…TYGA, DESS…PVEL, LWGS…EELE, and SRSG…ASSA. 2 positions are modified to phosphoserine: Ser318 and Ser326.

The protein belongs to the SPATA2 family.

The chain is Spermatogenesis-associated protein 2-like protein from Mus musculus (Mouse).